The sequence spans 130 residues: Granulin (130 aa).

The signal sequence occupies residues 1–26; the sequence is MNYSKIFIFGIISLILMALFSSTVES. 2 cysteine pairs are disulfide-bonded: Cys67–Cys79 and Cys73–Cys89.

The protein belongs to the granulin family. Granulins are disulfide bridged.

It is found in the secreted. This Dictyostelium discoideum (Social amoeba) protein is Granulin (grn).